We begin with the raw amino-acid sequence, 998 residues long: Calcium-transporting ATPase 3, endoplasmic reticulum-type (998 aa).

The Cytoplasmic portion of the chain corresponds to 1–48 (MEDAYARSVSEVLDFFGVDPTKGLSDSQVVHHSRLYGRNVLPEEKRTP). The chain crosses the membrane as a helical span at residues 49–69 (FWKLVLKQFDDLLVKILIVAA). Topologically, residues 70 to 89 (IVSFVLALANGETGLTAFLE) are lumenal. Residues 90–109 (PFVILLILAANAAVGVITET) form a helical membrane-spanning segment. The Cytoplasmic portion of the chain corresponds to 110-250 (NAEKALEELR…DEATPLKKKL (141 aa)). Residues 251–270 (DEFGSFLAKVIAGICVLVWV) traverse the membrane as a helical segment. The Lumenal portion of the chain corresponds to 271–291 (VNIGHFSDPSHGGFFKGAIHY). Residues 292–309 (FKIAVALAVAAIPEGLPA) form a helical membrane-spanning segment. Residues Val-300, Ala-301, Ile-303, and Glu-305 each coordinate Ca(2+). Residues 310–746 (VVTTCLALGT…AEGRAIYNNT (437 aa)) are Cytoplasmic-facing. Asp-347 functions as the 4-aspartylphosphate intermediate in the catalytic mechanism. Residues Asp-692 and Asp-696 each contribute to the Mg(2+) site. The chain crosses the membrane as a helical span at residues 747–766 (KQFIRYMISSNIGEVVCIFV). Positions 757 and 760 each coordinate Ca(2+). Residues 767-776 (AAVLGIPDTL) are Lumenal-facing. The chain crosses the membrane as a helical span at residues 777–797 (APVQLLWVNLVTDGLPATAIG). Residues Asn-785, Thr-788, and Asp-789 each coordinate Ca(2+). At 798–817 (FNKQDSDVMKAKPRKVGEAV) the chain is on the cytoplasmic side. A helical transmembrane segment spans residues 818-840 (VTGWLFFRYLVIGVYVGLATVAG). The Lumenal portion of the chain corresponds to 841 to 883 (FIWWFVYSDGGPKLTYSELMNFETCALRETTYPCSIFEDRHPS). The chain crosses the membrane as a helical span at residues 884-903 (TVAMTVLVVVEMFNALNNLS). Glu-894 is a binding site for Ca(2+). Topologically, residues 904-916 (ENQSLLVITPRSN) are cytoplasmic. A helical transmembrane segment spans residues 917 to 935 (LWLVGSIILTMLLHVLILY). The Lumenal segment spans residues 936 to 950 (VHPLAVLFSVTPLSW). The helical transmembrane segment at 951–971 (AEWTAVLYLSFPVIIIDELLK) threads the bilayer. Residues 972–998 (FLSRNTGMRFRFRLRKADLLPKDRRDK) lie on the Cytoplasmic side of the membrane.

This sequence belongs to the cation transport ATPase (P-type) (TC 3.A.3) family. Type IIA subfamily. As to expression, expressed in root cap, in elongation and differentiation zones of roots, in vascular tissues of roots, leaves, floral pedicels and style, in leaves, including hydathodes and guard cells, in stamens, in petals, in sepals and in siliques.

The protein resides in the golgi apparatus membrane. It is found in the endosome membrane. The protein localises to the prevacuolar compartment membrane. It carries out the reaction Ca(2+)(in) + ATP + H2O = Ca(2+)(out) + ADP + phosphate + H(+). Functionally, this magnesium-dependent enzyme catalyzes the hydrolysis of ATP coupled with the translocation of calcium from the cytosol to an endomembrane compartment. Involved in calcium-enhanced root growth, in tolerance to toxic levels of manganese and in secretory processes. Has a crucial role in manganese nutrition, but is not involved in transporting copper, iron or zinc. The protein is Calcium-transporting ATPase 3, endoplasmic reticulum-type of Arabidopsis thaliana (Mouse-ear cress).